The sequence spans 319 residues: Taste receptor type 2 member 14 (319 aa).

The Extracellular portion of the chain corresponds to 1–7 (MDGVIKS). The helical transmembrane segment at 8-28 (IFTFILIVEFIIGNLGNSFIV) threads the bilayer. Residues 29–55 (LVNCIDWVKRRKISLVDQILIALAISR) lie on the Cytoplasmic side of the membrane. Residues 56–76 (ISLVWSIFGSWCVSVFFPALF) traverse the membrane as a helical segment. Topologically, residues 77–87 (ATEKLLRMLTN) are extracellular. Cholesterol contacts are provided by threonine 86 and tryptophan 89. The helical transmembrane segment at 88 to 108 (IWTVTNHFSVWLATILGTFYF) threads the bilayer. Over 109-129 (LKIANFSNSIFLYLKWRVKKV) the chain is Cytoplasmic. Residues 130 to 150 (VLVLLLVTLGLLFLNILLINI) form a helical membrane-spanning segment. The Extracellular segment spans residues 151-184 (HINASINGYRGNMTCSSASCNFIRFSRAIALTST). Asparagine 153 and asparagine 162 each carry an N-linked (GlcNAc...) asparagine glycan. Alanine 180 contributes to the cholesterol binding site. Residues 185-205 (VFVLIPFTLSLATSLLLSFSL) traverse the membrane as a helical segment. At 206 to 233 (WKHHKKMQHTVKGYRDVSTKAHRGVMQT) the chain is on the cytoplasmic side. The chain crosses the membrane as a helical span at residues 234 to 254 (VITFLLLYAVFLLTFFISIWA). Topologically, residues 255 to 263 (SVRLKENQI) are extracellular. A helical membrane pass occupies residues 264–284 (IILSEMMGLAYPSGHSCVLIL). Serine 267 and methionine 270 together coordinate cholesterol. At 285-319 (GNKKLRQASLSVLWWLRYRFKHGEPSGHKEFRESS) the chain is on the cytoplasmic side.

The protein belongs to the G-protein coupled receptor T2R family. As to quaternary structure, core component of the TAS2R14-GNAI1 complex, consisting of TAS2R14, GNAI1, GNB1 and GNG2; within the complex interacts with GNAI1. Core component of the TAS2R14-GNAT3 complex, consisting of TAS2R14, GNAT3, GNB1 and GNG2; within the complex interacts with GNAT3. Core component of the TAS2R14-GNAS2 complex, consisting of TAS2R14, GNAS2, GNB1 and GNG2; within the complex interacts with GNAS2.

It localises to the membrane. It catalyses the reaction Ca(2+)(in) = Ca(2+)(out). The enzyme catalyses 3',5'-cyclic AMP(in) = 3',5'-cyclic AMP(out). Its activity is regulated as follows. Basal activity is enhanced by binding to bitter tastants, such as flufenamic acid and aristolochic acid. Regulated by cholesterol in a concentration-dependent manner. Functionally, gustducin-linked G-protein coupled receptor that plays a role in the perception of bitterness. The activity of this receptor stimulates GNAT3, activating the gustducin G-protein pathway. Likely plays a role in sensing the chemical composition of the gastrointestinal content and other extra-oral tissues via the inhibitory G-protein pathways. The sequence is that of Taste receptor type 2 member 14 (TAS2R14) from Macaca mulatta (Rhesus macaque).